The chain runs to 1638 residues: DNA polymerase III PolC-type (1638 aa).

The interval 193–212 (SEIKKQRSEERESKNTREAK) is disordered. Residues 194–212 (EIKKQRSEERESKNTREAK) show a composition bias toward basic and acidic residues. The Exonuclease domain maps to 596–752 (YVVFDVETTG…FDAEATGRLL (157 aa)).

Belongs to the DNA polymerase type-C family. PolC subfamily.

The protein resides in the cytoplasm. The enzyme catalyses DNA(n) + a 2'-deoxyribonucleoside 5'-triphosphate = DNA(n+1) + diphosphate. In terms of biological role, required for replicative DNA synthesis. This DNA polymerase also exhibits 3' to 5' exonuclease activity. The protein is DNA polymerase III PolC-type of Lactococcus lactis subsp. lactis (strain IL1403) (Streptococcus lactis).